The primary structure comprises 302 residues: Myeloid-associated differentiation marker-like protein 2 (302 aa).

MARVEL domains follow at residues Ala13–Gly149 and Tyr154–Ile298. Transmembrane regions (helical) follow at residues Ala45–Val65, Ala87–Phe107, Leu124–Thr144, Ala158–Ala178, Trp191–Ile211, Phe225–Pro245, and Leu273–Thr293.

The protein belongs to the MAL family.

The protein localises to the membrane. The chain is Myeloid-associated differentiation marker-like protein 2 (myadml2) from Xenopus laevis (African clawed frog).